The primary structure comprises 67 residues: Large ribosomal subunit protein uL29 (67 aa).

This sequence belongs to the universal ribosomal protein uL29 family.

The polypeptide is Large ribosomal subunit protein uL29 (Heliobacterium modesticaldum (strain ATCC 51547 / Ice1)).